A 385-amino-acid polypeptide reads, in one-letter code: Carbamoyl phosphate synthase small chain (385 aa).

Residues 1-185 are CPSase; sequence MSEPAILVLA…LGKGFIEQTQ (185 aa). Ser47, Gly237, and Gly239 together coordinate L-glutamine. A Glutamine amidotransferase type-1 domain is found at 189 to 376; that stretch reads NVVAYDFGVK…INEMRKANLS (188 aa). The active-site Nucleophile is Cys265. The L-glutamine site is built by Leu266, Gln269, Asn307, Gly309, and Phe310. Residues His349 and Glu351 contribute to the active site.

This sequence belongs to the CarA family. Composed of two chains; the small (or glutamine) chain promotes the hydrolysis of glutamine to ammonia, which is used by the large (or ammonia) chain to synthesize carbamoyl phosphate. Tetramer of heterodimers (alpha,beta)4.

The catalysed reaction is hydrogencarbonate + L-glutamine + 2 ATP + H2O = carbamoyl phosphate + L-glutamate + 2 ADP + phosphate + 2 H(+). It carries out the reaction L-glutamine + H2O = L-glutamate + NH4(+). It functions in the pathway amino-acid biosynthesis; L-arginine biosynthesis; carbamoyl phosphate from bicarbonate: step 1/1. Its pathway is pyrimidine metabolism; UMP biosynthesis via de novo pathway; (S)-dihydroorotate from bicarbonate: step 1/3. Functionally, small subunit of the glutamine-dependent carbamoyl phosphate synthetase (CPSase). CPSase catalyzes the formation of carbamoyl phosphate from the ammonia moiety of glutamine, carbonate, and phosphate donated by ATP, constituting the first step of 2 biosynthetic pathways, one leading to arginine and/or urea and the other to pyrimidine nucleotides. The small subunit (glutamine amidotransferase) binds and cleaves glutamine to supply the large subunit with the substrate ammonia. The polypeptide is Carbamoyl phosphate synthase small chain (Pasteurella multocida (strain Pm70)).